Here is a 217-residue protein sequence, read N- to C-terminus: Probable glutathione S-transferase DHAR4 (217 aa).

Positions 8 and 19 each coordinate glutathione. Positions 8 and 19 each coordinate L-ascorbate. Residues 10–85 (ASGAPDVLGD…DLIVGIIEEK (76 aa)) enclose the GST N-terminal domain. The active-site Nucleophile is the C20. The Glutathione-binding signature appears at 20 to 25 (CPFGQR). Glutathione contacts are provided by K47, S75, H164, and W211. One can recognise a GST C-terminal domain in the interval 86–217 (YPEPSLVTFP…IASWAPKLDV (132 aa)). Residue K214 coordinates L-ascorbate.

Belongs to the GST superfamily. DHAR family. In terms of assembly, monomer.

The protein localises to the cytoplasm. Its subcellular location is the cytosol. The catalysed reaction is RX + glutathione = an S-substituted glutathione + a halide anion + H(+). It carries out the reaction L-dehydroascorbate + 2 glutathione = glutathione disulfide + L-ascorbate. Functionally, exhibits glutathione-dependent thiol transferase and dehydroascorbate (DHA) reductase activities. The polypeptide is Probable glutathione S-transferase DHAR4 (DHAR4) (Arabidopsis thaliana (Mouse-ear cress)).